The chain runs to 320 residues: Methenyltetrahydromethanopterin cyclohydrolase (320 aa).

The protein belongs to the MCH family.

The protein localises to the cytoplasm. The catalysed reaction is 5,10-methenyl-5,6,7,8-tetrahydromethanopterin + H2O = N(5)-formyl-5,6,7,8-tetrahydromethanopterin + H(+). In terms of biological role, catalyzes the hydrolysis of methenyl-H(4)MPT(+) to 5-formyl-H(4)MPT. In Methanococcoides burtonii (strain DSM 6242 / NBRC 107633 / OCM 468 / ACE-M), this protein is Methenyltetrahydromethanopterin cyclohydrolase.